A 582-amino-acid chain; its full sequence is ATP-dependent lipid A-core flippase (582 aa).

The next 5 membrane-spanning stretches (helical) occupy residues 25–45 (WFML…QAGA), 64–84 (VLIV…GQFM), 142–162 (AIIV…FLLW), 165–185 (WKLT…MNIT), and 253–273 (VIVQ…YIHL). Positions 29–309 (VISVIGYALY…LTDVNVKVQR (281 aa)) constitute an ABC transmembrane type-1 domain. The region spanning 342–577 (IDFEGVSFGY…NGLYTQMYRM (236 aa)) is the ABC transporter domain. 375 to 382 (GRSGAGKS) is an ATP binding site.

It belongs to the ABC transporter superfamily. Lipid exporter (TC 3.A.1.106) family. Homodimer.

The protein localises to the cell inner membrane. It carries out the reaction ATP + H2O + lipid A-core oligosaccharideSide 1 = ADP + phosphate + lipid A-core oligosaccharideSide 2.. Functionally, involved in lipopolysaccharide (LPS) biosynthesis. Translocates lipid A-core from the inner to the outer leaflet of the inner membrane. Transmembrane domains (TMD) form a pore in the inner membrane and the ATP-binding domain (NBD) is responsible for energy generation. This is ATP-dependent lipid A-core flippase from Alcanivorax borkumensis (strain ATCC 700651 / DSM 11573 / NCIMB 13689 / SK2).